A 260-amino-acid polypeptide reads, in one-letter code: Ribonuclease PH (260 aa).

Residues arginine 87 and 125 to 127 (GTR) each bind phosphate. Residues 232–260 (LAAPPAAGPPAPERAGAGSGSGGKGTGSR) form a disordered region. A compositionally biased stretch (gly residues) spans 248-260 (AGSGSGGKGTGSR).

It belongs to the RNase PH family. As to quaternary structure, homohexameric ring arranged as a trimer of dimers.

The catalysed reaction is tRNA(n+1) + phosphate = tRNA(n) + a ribonucleoside 5'-diphosphate. Phosphorolytic 3'-5' exoribonuclease that plays an important role in tRNA 3'-end maturation. Removes nucleotide residues following the 3'-CCA terminus of tRNAs; can also add nucleotides to the ends of RNA molecules by using nucleoside diphosphates as substrates, but this may not be physiologically important. Probably plays a role in initiation of 16S rRNA degradation (leading to ribosome degradation) during starvation. This chain is Ribonuclease PH, found in Parafrankia sp. (strain EAN1pec).